The sequence spans 196 residues: Retinol-binding protein 4 (196 aa).

Residues 1 to 21 (MAYTWRALLLLALAFLGSSMA) form the signal peptide. Intrachain disulfides connect Cys25–Cys181, Cys91–Cys195, and Cys141–Cys150. Residue Gln119 coordinates substrate.

Belongs to the calycin superfamily. Lipocalin family. As to quaternary structure, interacts with TTR. Interaction with TTR prevents its loss by filtration through the kidney glomeruli. Interacts with STRA6.

The protein resides in the secreted. Its function is as follows. Retinol-binding protein that mediates retinol transport in blood plasma. Delivers retinol from the liver stores to the peripheral tissues. Transfers the bound all-trans retinol to STRA6, that then facilitates retinol transport across the cell membrane. This is Retinol-binding protein 4 (RBP4) from Gallus gallus (Chicken).